The chain runs to 607 residues: T-box transcription factor TBX18 (607 aa).

The Engrailed homology 1 repressor signature appears at 18-28 (HAFSVEALIGA). The disordered stretch occupies residues 30 to 141 (KQQQLQKKRR…PLPSPQAPRV (112 aa)). The Nuclear localization signal motif lies at 36 to 40 (KKRRK). The span at 44-53 (EEAAGAVDDG) shows a compositional bias: low complexity. The T-box DNA-binding region spans 143 to 330 (LQGAELWKRF…RNPFAKGFRD (188 aa)).

As to quaternary structure, homodimer. Can form a heterodimer with TBX15. Interacts with GATA4 and NKX2-5. Interacts with PAX3. Interacts (via engrailed homology 1 repressor motif) with TLE3; this interaction represses TBX18 transcriptional activity. Interacts with SIX1.

The protein resides in the nucleus. Its function is as follows. Acts as a transcriptional repressor involved in developmental processes of a variety of tissues and organs, including the heart and coronary vessels, the ureter and the vertebral column. Required for embryonic development of the sino atrial node (SAN) head area. This Homo sapiens (Human) protein is T-box transcription factor TBX18 (TBX18).